Consider the following 157-residue polypeptide: Endoribonuclease YbeY (157 aa).

The Zn(2+) site is built by His-116, His-120, and His-126.

This sequence belongs to the endoribonuclease YbeY family. The cofactor is Zn(2+).

Its subcellular location is the cytoplasm. Functionally, single strand-specific metallo-endoribonuclease involved in late-stage 70S ribosome quality control and in maturation of the 3' terminus of the 16S rRNA. In Blochmanniella pennsylvanica (strain BPEN), this protein is Endoribonuclease YbeY.